A 324-amino-acid chain; its full sequence is GTP cyclohydrolase 1 (324 aa).

Disordered stretches follow at residues 33-59 and 79-119; these read GRNNSVCSTSSTSGTSSLADRQQNQAE and VPLA…TPGH. Positions 40-49 are enriched in low complexity; sequence STSSTSGTSS. Polar residues-rich tracts occupy residues 50–59 and 93–117; these read LADRQQNQAE and TNGSSPDSDGTQPKTPLTPRTSTTP. Zn(2+)-binding residues include Cys214, His217, and Cys285.

This sequence belongs to the GTP cyclohydrolase I family. As to quaternary structure, toroid-shaped homodecamer, composed of two pentamers of five dimers. Isoform B is expressed almost exclusively in adult heads.

The catalysed reaction is GTP + H2O = 7,8-dihydroneopterin 3'-triphosphate + formate + H(+). It participates in cofactor biosynthesis; 7,8-dihydroneopterin triphosphate biosynthesis; 7,8-dihydroneopterin triphosphate from GTP: step 1/1. In terms of biological role, isoform B is required for eye pigment production, Isoform C may be required for normal embryonic development and segment pattern formation. In Drosophila melanogaster (Fruit fly), this protein is GTP cyclohydrolase 1 (Pu).